The sequence spans 167 residues: MPRRPIQKKRSVLPDPIYNSISVHMLVNRVMKNGKKSLAYKIVYNTLKNIGETTQQNPVEVFEAALENVMPKVEVQPRRRAGSVQMVPSILRSTERGQATALRWILESCEKKSAKSMVSKLQTEILDAYEKKGNAIKKKEELHKIAANNAMYSNRPQIILNAVSIVS.

Belongs to the universal ribosomal protein uS7 family. As to quaternary structure, part of the 30S ribosomal subunit.

Its subcellular location is the plastid. The protein resides in the chloroplast. Its function is as follows. One of the primary rRNA binding proteins, it binds directly to 16S rRNA where it nucleates assembly of the head domain of the 30S subunit. This Tetradesmus obliquus (Green alga) protein is Small ribosomal subunit protein uS7c (rps7).